Consider the following 268-residue polypeptide: 14-3-3-like protein GF14 upsilon (268 aa).

2 positions are modified to phosphoserine: S69 and S192. Residue T213 is modified to Phosphothreonine. The tract at residues 243–268 (EAGDDIKEAPKEVQKVDEQAQPPPSQ) is disordered. A compositionally biased stretch (basic and acidic residues) spans 246–260 (DDIKEAPKEVQKVDE). S267 carries the post-translational modification Phosphoserine.

The protein belongs to the 14-3-3 family. As to quaternary structure, interacts with EDE1. Interacts with DREB1A and DREB1B in the nucleus. Interacts with CINV1.

Its subcellular location is the cytoplasm. The protein resides in the nucleus. Its function is as follows. Is associated with a DNA binding complex that binds to the G box, a well-characterized cis-acting DNA regulatory element found in plant genes. May be involved in cell cycle regulation by binding to soluble EDE1 and sequestering it in an inactive form during the early stages of mitosis. The chain is 14-3-3-like protein GF14 upsilon (GRF5) from Arabidopsis thaliana (Mouse-ear cress).